Reading from the N-terminus, the 109-residue chain is Large ribosomal subunit protein uL24 (109 aa).

The protein belongs to the universal ribosomal protein uL24 family. In terms of assembly, part of the 50S ribosomal subunit.

Its function is as follows. One of two assembly initiator proteins, it binds directly to the 5'-end of the 23S rRNA, where it nucleates assembly of the 50S subunit. One of the proteins that surrounds the polypeptide exit tunnel on the outside of the subunit. This chain is Large ribosomal subunit protein uL24, found in Syntrophotalea carbinolica (strain DSM 2380 / NBRC 103641 / GraBd1) (Pelobacter carbinolicus).